The chain runs to 221 residues: MVRIASGEMKERLAVYFIMGSQNSERPAADVLKEALDGGVTLFQFREKGPGALKGADKEALARQLQRLCRAYGVPFIVNDDVELALAIDADGVHVGQDDEDARRVREKIGDKILGVSAHNVEEAMAAVEAGADYLGVGPIYPTSSKEDAKEAQGPDVLRRLREAGITIPIVAIGGITAANAKTVVEAGADGVSVISAIASAPSPKAAAAALAEAVRAARTR.

4-amino-2-methyl-5-(diphosphooxymethyl)pyrimidine-binding positions include Q44–K48 and N79. Residues D80 and D99 each coordinate Mg(2+). Position 117 (S117) interacts with 4-amino-2-methyl-5-(diphosphooxymethyl)pyrimidine. T143–S145 serves as a coordination point for 2-[(2R,5Z)-2-carboxy-4-methylthiazol-5(2H)-ylidene]ethyl phosphate. A 4-amino-2-methyl-5-(diphosphooxymethyl)pyrimidine-binding site is contributed by K146. Residues G175 and I195–S196 contribute to the 2-[(2R,5Z)-2-carboxy-4-methylthiazol-5(2H)-ylidene]ethyl phosphate site.

Belongs to the thiamine-phosphate synthase family. The cofactor is Mg(2+).

It catalyses the reaction 2-[(2R,5Z)-2-carboxy-4-methylthiazol-5(2H)-ylidene]ethyl phosphate + 4-amino-2-methyl-5-(diphosphooxymethyl)pyrimidine + 2 H(+) = thiamine phosphate + CO2 + diphosphate. It carries out the reaction 2-(2-carboxy-4-methylthiazol-5-yl)ethyl phosphate + 4-amino-2-methyl-5-(diphosphooxymethyl)pyrimidine + 2 H(+) = thiamine phosphate + CO2 + diphosphate. The enzyme catalyses 4-methyl-5-(2-phosphooxyethyl)-thiazole + 4-amino-2-methyl-5-(diphosphooxymethyl)pyrimidine + H(+) = thiamine phosphate + diphosphate. Its pathway is cofactor biosynthesis; thiamine diphosphate biosynthesis; thiamine phosphate from 4-amino-2-methyl-5-diphosphomethylpyrimidine and 4-methyl-5-(2-phosphoethyl)-thiazole: step 1/1. Its function is as follows. Condenses 4-methyl-5-(beta-hydroxyethyl)thiazole monophosphate (THZ-P) and 2-methyl-4-amino-5-hydroxymethyl pyrimidine pyrophosphate (HMP-PP) to form thiamine monophosphate (TMP). The polypeptide is Thiamine-phosphate synthase (Geobacillus kaustophilus (strain HTA426)).